A 1401-amino-acid polypeptide reads, in one-letter code: DNA-directed RNA polymerase subunit beta (1401 aa).

It belongs to the RNA polymerase beta chain family. The RNAP catalytic core consists of 2 alpha, 1 beta, 1 beta' and 1 omega subunit. When a sigma factor is associated with the core the holoenzyme is formed, which can initiate transcription.

The enzyme catalyses RNA(n) + a ribonucleoside 5'-triphosphate = RNA(n+1) + diphosphate. Functionally, DNA-dependent RNA polymerase catalyzes the transcription of DNA into RNA using the four ribonucleoside triphosphates as substrates. The chain is DNA-directed RNA polymerase subunit beta from Zymomonas mobilis subsp. mobilis (strain ATCC 31821 / ZM4 / CP4).